Here is a 103-residue protein sequence, read N- to C-terminus: Large ribosomal subunit protein eL30 (103 aa).

This sequence belongs to the eukaryotic ribosomal protein eL30 family.

This chain is Large ribosomal subunit protein eL30, found in Methanosarcina mazei (strain ATCC BAA-159 / DSM 3647 / Goe1 / Go1 / JCM 11833 / OCM 88) (Methanosarcina frisia).